Reading from the N-terminus, the 364-residue chain is Flagellar P-ring protein (364 aa).

The first 29 residues, 1–29 (MKTIGGKVFRHAAILAACVLPLWCQPALA), serve as a signal peptide directing secretion.

Belongs to the FlgI family. As to quaternary structure, the basal body constitutes a major portion of the flagellar organelle and consists of four rings (L,P,S, and M) mounted on a central rod.

The protein localises to the periplasm. It localises to the bacterial flagellum basal body. Its function is as follows. Assembles around the rod to form the L-ring and probably protects the motor/basal body from shearing forces during rotation. This Dechloromonas aromatica (strain RCB) protein is Flagellar P-ring protein.